A 203-amino-acid chain; its full sequence is Nucleoside triphosphate pyrophosphatase (203 aa).

The active-site Proton acceptor is the Asp77.

The protein belongs to the Maf family. The cofactor is a divalent metal cation.

The protein localises to the cytoplasm. The catalysed reaction is a ribonucleoside 5'-triphosphate + H2O = a ribonucleoside 5'-phosphate + diphosphate + H(+). It catalyses the reaction a 2'-deoxyribonucleoside 5'-triphosphate + H2O = a 2'-deoxyribonucleoside 5'-phosphate + diphosphate + H(+). Nucleoside triphosphate pyrophosphatase. May have a dual role in cell division arrest and in preventing the incorporation of modified nucleotides into cellular nucleic acids. This Rickettsia felis (strain ATCC VR-1525 / URRWXCal2) (Rickettsia azadi) protein is Nucleoside triphosphate pyrophosphatase.